We begin with the raw amino-acid sequence, 411 residues long: Phosphoglycerate kinase (411 aa).

Residues 19-21 (DLN), R34, 57-60 (HQSR), R114, and R154 each bind substrate. Residues E332 and 358 to 361 (GGHS) each bind ATP.

This sequence belongs to the phosphoglycerate kinase family. Monomer.

The protein resides in the cytoplasm. The catalysed reaction is (2R)-3-phosphoglycerate + ATP = (2R)-3-phospho-glyceroyl phosphate + ADP. The protein operates within carbohydrate degradation; glycolysis; pyruvate from D-glyceraldehyde 3-phosphate: step 2/5. This Thermococcus kodakarensis (strain ATCC BAA-918 / JCM 12380 / KOD1) (Pyrococcus kodakaraensis (strain KOD1)) protein is Phosphoglycerate kinase.